The chain runs to 315 residues: MATNSEFLIPARADLAAAREEWLKSLKTMRRLSDNTLIAYERDTRQFLQFLTGHLGEPPSLKEIGNLRIADLRSFLANRRNDGAGARTLGRGLAGVRSLLRHLEKRGLVNAAGASAMRAPRQPKSLPKPLTADDARRVVSADGQMAEEPWIAARNAAVLTLLYGCGLRISEALGLSGDALSDPSARSMTITGKGSKTRLVPLLPAVHKAVAQYRALCPFDLSAGQPLFRGAKGGPLHAAIIQREMQKLRAGLGLPDSATPHALRHSFATHLLGRGGDLRTIQELLGHASLSTTQVYTGVDTQRLLEVYDKTHPRA.

The Core-binding (CB) domain maps to 13 to 104 (ADLAAAREEW…GVRSLLRHLE (92 aa)). A Tyr recombinase domain is found at 125-309 (SLPKPLTADD…DTQRLLEVYD (185 aa)). Active-site residues include Arg-168, Lys-193, His-261, Arg-264, and His-287. Residue Tyr-296 is the O-(3'-phospho-DNA)-tyrosine intermediate of the active site.

Belongs to the 'phage' integrase family. XerC subfamily. In terms of assembly, forms a cyclic heterotetrameric complex composed of two molecules of XerC and two molecules of XerD.

Its subcellular location is the cytoplasm. Site-specific tyrosine recombinase, which acts by catalyzing the cutting and rejoining of the recombining DNA molecules. The XerC-XerD complex is essential to convert dimers of the bacterial chromosome into monomers to permit their segregation at cell division. It also contributes to the segregational stability of plasmids. This is Tyrosine recombinase XerC from Brucella suis biovar 1 (strain 1330).